We begin with the raw amino-acid sequence, 1346 residues long: DNA-directed RNA polymerase subunit beta (1346 aa).

Belongs to the RNA polymerase beta chain family. In terms of assembly, the RNAP catalytic core consists of 2 alpha, 1 beta, 1 beta' and 1 omega subunit. When a sigma factor is associated with the core the holoenzyme is formed, which can initiate transcription.

It carries out the reaction RNA(n) + a ribonucleoside 5'-triphosphate = RNA(n+1) + diphosphate. Functionally, DNA-dependent RNA polymerase catalyzes the transcription of DNA into RNA using the four ribonucleoside triphosphates as substrates. The sequence is that of DNA-directed RNA polymerase subunit beta from Psychromonas ingrahamii (strain DSM 17664 / CCUG 51855 / 37).